The sequence spans 803 residues: Phosphoribosylformylglycinamidine synthase subunit PurL (803 aa).

The active site involves H65. 2 residues coordinate ATP: Y68 and K107. Residue E109 coordinates Mg(2+). Residues 110 to 113 and R132 each bind substrate; that span reads SHNH. H111 functions as the Proton acceptor in the catalytic mechanism. D133 contributes to the Mg(2+) binding site. Q256 is a substrate binding site. D284 is a Mg(2+) binding site. Position 328 to 330 (328 to 330) interacts with substrate; that stretch reads ESQ. Positions 537 and 574 each coordinate ATP. Position 575 (N575) interacts with Mg(2+). S577 serves as a coordination point for substrate.

This sequence belongs to the FGAMS family. Monomer. Part of the FGAM synthase complex composed of 1 PurL, 1 PurQ and 2 PurS subunits.

The protein localises to the cytoplasm. The enzyme catalyses N(2)-formyl-N(1)-(5-phospho-beta-D-ribosyl)glycinamide + L-glutamine + ATP + H2O = 2-formamido-N(1)-(5-O-phospho-beta-D-ribosyl)acetamidine + L-glutamate + ADP + phosphate + H(+). The protein operates within purine metabolism; IMP biosynthesis via de novo pathway; 5-amino-1-(5-phospho-D-ribosyl)imidazole from N(2)-formyl-N(1)-(5-phospho-D-ribosyl)glycinamide: step 1/2. Part of the phosphoribosylformylglycinamidine synthase complex involved in the purines biosynthetic pathway. Catalyzes the ATP-dependent conversion of formylglycinamide ribonucleotide (FGAR) and glutamine to yield formylglycinamidine ribonucleotide (FGAM) and glutamate. The FGAM synthase complex is composed of three subunits. PurQ produces an ammonia molecule by converting glutamine to glutamate. PurL transfers the ammonia molecule to FGAR to form FGAM in an ATP-dependent manner. PurS interacts with PurQ and PurL and is thought to assist in the transfer of the ammonia molecule from PurQ to PurL. This chain is Phosphoribosylformylglycinamidine synthase subunit PurL, found in Prochlorococcus marinus (strain NATL2A).